Consider the following 85-residue polypeptide: Large ribosomal subunit protein bL27 (85 aa).

A disordered region spans residues 1–20; sequence MAHKKAGGSTRNGRDSEAKR.

The protein belongs to the bacterial ribosomal protein bL27 family.

The sequence is that of Large ribosomal subunit protein bL27 from Salmonella agona (strain SL483).